The sequence spans 626 residues: Endo-1,3(4)-beta-glucanase xgeA (626 aa).

An N-terminal signal peptide occupies residues 1-25; it reads MSSSLMRRVGSLAASAIIFPGIAHA. The region spanning 33–286 is the GH16 domain; it reads ESWEGEKILN…WAGGVFGDSG (254 aa). Residue N61 is glycosylated (N-linked (GlcNAc...) asparagine). The active-site Nucleophile is the E142. The Proton donor role is filled by E147. Low complexity predominate over residues 477–494; that stretch reads ASTDAAAATTPAAEPHPS. Positions 477 to 533 are disordered; sequence ASTDAAAATTPAAEPHPSNAETPADSKSSADAVTAQATKTTIAVNTPNPATDSASSV. Over residues 495–533 the composition is skewed to polar residues; it reads NAETPADSKSSADAVTAQATKTTIAVNTPNPATDSASSV. G603 carries GPI-anchor amidated glycine lipidation. Positions 604–626 are cleaved as a propeptide — removed in mature form; that stretch reads VGSKVSISASVAIAAFVMLLLVN.

The protein belongs to the glycosyl hydrolase 16 family.

It is found in the cell membrane. The enzyme catalyses Endohydrolysis of (1-&gt;3)- or (1-&gt;4)-linkages in beta-D-glucans when the glucose residue whose reducing group is involved in the linkage to be hydrolyzed is itself substituted at C-3.. Its function is as follows. Mixed-linked glucanase involved in the degradation of complex natural cellulosic substrates. Active on laminarin. lichenan, soluble carboxymethyl cellulose but not on pustulan. The polypeptide is Endo-1,3(4)-beta-glucanase xgeA (xgeA) (Emericella nidulans (strain FGSC A4 / ATCC 38163 / CBS 112.46 / NRRL 194 / M139) (Aspergillus nidulans)).